A 1013-amino-acid polypeptide reads, in one-letter code: Mediator of RNA polymerase II transcription subunit 5 (1013 aa).

Belongs to the Mediator complex subunit 5 family. In terms of assembly, component of the Mediator complex.

The protein localises to the nucleus. Functionally, component of the Mediator complex, a coactivator involved in the regulated transcription of nearly all RNA polymerase II-dependent genes. Mediator functions as a bridge to convey information from gene-specific regulatory proteins to the basal RNA polymerase II transcription machinery. Mediator is recruited to promoters by direct interactions with regulatory proteins and serves as a scaffold for the assembly of a functional preinitiation complex with RNA polymerase II and the general transcription factors. The chain is Mediator of RNA polymerase II transcription subunit 5 (NUT1) from Aspergillus oryzae (strain ATCC 42149 / RIB 40) (Yellow koji mold).